A 681-amino-acid polypeptide reads, in one-letter code: Proline-rich receptor-like protein kinase PERK8 (681 aa).

Pro residues predominate over residues 1–11 (MSLVPPLPILS). The tract at residues 1–231 (MSLVPPLPIL…TLPSSSPGKS (231 aa)) is disordered. The Extracellular segment spans residues 1 to 237 (MSLVPPLPIL…PGKSEVGTGG (237 aa)). An N-linked (GlcNAc...) asparagine glycan is attached at Asn-16. Residues 21 to 163 (APPPLQTQPT…SPPKPSPSTP (143 aa)) show a composition bias toward pro residues. Residues 177–191 (TSASPPSSNPTDPST) are compositionally biased toward low complexity. Pro residues predominate over residues 192-201 (LAPPPTPLPV). The span at 214–229 (PASNNGNNTLPSSSPG) shows a compositional bias: polar residues. A glycan (N-linked (GlcNAc...) asparagine) is linked at Asn-220. The chain crosses the membrane as a helical span at residues 238–258 (IVAIGVIVGLVFLSLFVMGVW). Over 259-681 (FTRKRKRKDP…GSRDQSRFVP (423 aa)) the chain is Cytoplasmic. The Protein kinase domain maps to 339-617 (FSEKNLLGEG…SQVVRALDTL (279 aa)). Residues 345–353 (LGEGGFGCV) and Lys-367 contribute to the ATP site. Tyr-412 carries the post-translational modification Phosphotyrosine. The active-site Proton acceptor is the Asp-463. Residues Ser-467 and Ser-498 each carry the phosphoserine modification. Phosphothreonine is present on residues Thr-499 and Thr-504. Phosphotyrosine is present on Tyr-512.

The protein belongs to the protein kinase superfamily. Ser/Thr protein kinase family. In terms of assembly, interacts with KIPK1 and KIPK2 (via its cytosolic domain). As to expression, mostly expressed in seedlings, roots, inflorescence bolts and flower buds.

Its subcellular location is the cell membrane. The enzyme catalyses L-seryl-[protein] + ATP = O-phospho-L-seryl-[protein] + ADP + H(+). It catalyses the reaction L-threonyl-[protein] + ATP = O-phospho-L-threonyl-[protein] + ADP + H(+). In terms of biological role, could be involved in the negative regulation of root growth. The sequence is that of Proline-rich receptor-like protein kinase PERK8 (PERK8) from Arabidopsis thaliana (Mouse-ear cress).